The sequence spans 444 residues: Phosphoglucosamine mutase (444 aa).

Ser103 serves as the catalytic Phosphoserine intermediate. Mg(2+) is bound by residues Ser103, Asp241, Asp243, and Asp245. Residue Ser103 is modified to Phosphoserine.

Belongs to the phosphohexose mutase family. It depends on Mg(2+) as a cofactor. In terms of processing, activated by phosphorylation.

It carries out the reaction alpha-D-glucosamine 1-phosphate = D-glucosamine 6-phosphate. Its function is as follows. Catalyzes the conversion of glucosamine-6-phosphate to glucosamine-1-phosphate. The chain is Phosphoglucosamine mutase from Deinococcus radiodurans (strain ATCC 13939 / DSM 20539 / JCM 16871 / CCUG 27074 / LMG 4051 / NBRC 15346 / NCIMB 9279 / VKM B-1422 / R1).